Here is a 1429-residue protein sequence, read N- to C-terminus: uncharacterized protein (1429 aa).

Disordered regions lie at residues 1 to 76 and 103 to 130; these read MEGE…SGIE and PAGAAESAQNANLISSKSENVPEPAGEK. Positions 14 to 29 are enriched in low complexity; that stretch reads SHSTSVVSERASSSGV. The span at 109 to 121 shows a compositional bias: polar residues; sequence SAQNANLISSKSE. 2 helical membrane passes run 197–217 and 225–245; these read LTGQWWQSTSILLAVSILSWI and FFILFFIIITGTIVYGSCMIS. The SMP-LTD domain maps to 266–471; that stretch reads DYETMSWFNT…WPNMFDYDLS (206 aa). C2 domains follow at residues 462 to 584 and 738 to 858; these read WPNM…GDIY and TPVD…DRSA. A disordered region spans residues 899–932; it reads NTDNSSKQSSENVQSATDPTTPAKDNSTSNAETS. The 118-residue stretch at 1060-1177 folds into the C2 3 domain; the sequence is TYMPVPMTLN…EPNVESQQSI (118 aa). A disordered region spans residues 1280–1303; it reads EKNPSRSDLTTTQEASSSASVPPA. The span at 1294–1303 shows a compositional bias: low complexity; it reads ASSSASVPPA.

The protein resides in the membrane. This is an uncharacterized protein from Schizosaccharomyces pombe (strain 972 / ATCC 24843) (Fission yeast).